The primary structure comprises 328 residues: Nucleotide-binding protein BL0705 (328 aa).

Residues 1–35 (MNQQTTNRDTGEAAATNAPANSATSTSTPDNQPTP) form a disordered region. The segment covering 13-29 (AAATNAPANSATSTSTP) has biased composition (low complexity). 46–53 (GMSGAGRS) contacts ATP. Position 101–104 (101–104 (DVRS)) interacts with GTP.

This sequence belongs to the RapZ-like family.

Functionally, displays ATPase and GTPase activities. The protein is Nucleotide-binding protein BL0705 of Bifidobacterium longum (strain NCC 2705).